Reading from the N-terminus, the 571-residue chain is Calcium-dependent protein kinase 16 (571 aa).

The interval 1–74 is disordered; the sequence is MGLCFSSAAK…TRHTPPHGKV (74 aa). Glycine 2 carries the N-myristoyl glycine lipid modification. Cysteine 4 is lipidated: S-palmitoyl cysteine. Basic residues predominate over residues 63–72; the sequence is TPTRHTPPHG. The Protein kinase domain occupies 108-368; it reads YTIGKLLGHG…AAQALSHPWV (261 aa). ATP is bound by residues 114 to 122 and lysine 137; that span reads LGHGQFGYT. Aspartate 234 (proton acceptor) is an active-site residue. Serine 274 is subject to Phosphoserine. The autoinhibitory domain stretch occupies residues 374 to 404; the sequence is ASEIPIDISVLNNMRQFVKFSRLKQFALRAL. EF-hand domains follow at residues 411–446, 448–483, 490–525, and 528–555; these read EELADLRDQFDAIDVDKNGVISLEEMRQALAKDHPW, LKDARVAEILQAIDSNTDGFVDFGEFVAAALHVNQL, KWQQRSRAAFEKFDIDGDGFITAEELRMHTGLKGSI, and LLEEADIDNDGKISLQEFRRLLRTASIK. The Ca(2+) site is built by aspartate 424, aspartate 426, asparagine 428, glutamate 435, aspartate 461, asparagine 463, aspartate 465, glutamate 472, aspartate 503, aspartate 505, aspartate 507, glutamate 514, aspartate 533, aspartate 535, aspartate 537, and lysine 539. Serine 541 is subject to Phosphoserine. Position 544 (glutamate 544) interacts with Ca(2+).

This sequence belongs to the protein kinase superfamily. Ser/Thr protein kinase family. CDPK subfamily.

It is found in the cell membrane. Its subcellular location is the nucleus. The enzyme catalyses L-seryl-[protein] + ATP = O-phospho-L-seryl-[protein] + ADP + H(+). The catalysed reaction is L-threonyl-[protein] + ATP = O-phospho-L-threonyl-[protein] + ADP + H(+). Activated by calcium. Autophosphorylation may play an important role in the regulation of the kinase activity. May play a role in signal transduction pathways that involve calcium as a second messenger. This chain is Calcium-dependent protein kinase 16 (CPK16), found in Arabidopsis thaliana (Mouse-ear cress).